A 340-amino-acid polypeptide reads, in one-letter code: Probable HTH-type transcriptional regulator EndR (340 aa).

Positions 1–58 constitute an HTH lacI-type domain; the sequence is MVTTMKEVAERAGVSKSTVSQFLQKRYNYMSENTKKKIEQAIEDLSYIPNEVARSLKQ. A DNA-binding region (H-T-H motif) is located at residues 5–24; the sequence is MKEVAERAGVSKSTVSQFLQ.

In terms of biological role, putative repressor of the endoglucanase operon. This chain is Probable HTH-type transcriptional regulator EndR (endR), found in Paenibacillus polymyxa (Bacillus polymyxa).